We begin with the raw amino-acid sequence, 239 residues long: Caffeoyl-CoA O-methyltransferase 1 (239 aa).

Residue Lys13 participates in substrate binding. S-adenosyl-L-methionine is bound by residues Thr55, Glu77, 79 to 80 (GV), Ser85, Asp103, and Ala132. Asp155 lines the substrate pocket. Asp155 contacts a divalent metal cation. Asp157 contacts S-adenosyl-L-methionine. A divalent metal cation contacts are provided by Asp181 and Asn182. Asn186 lines the substrate pocket.

The protein belongs to the class I-like SAM-binding methyltransferase superfamily. Cation-dependent O-methyltransferase family. CCoAMT subfamily. In terms of assembly, monomer. Requires Mg(2+) as cofactor. As to expression, mostly expressed in the bottom and middle parts of the stems.

The enzyme catalyses (E)-caffeoyl-CoA + S-adenosyl-L-methionine = (E)-feruloyl-CoA + S-adenosyl-L-homocysteine + H(+). It participates in aromatic compound metabolism; phenylpropanoid biosynthesis. In terms of biological role, methylates caffeoyl-CoA to feruloyl-CoA and 5-hydroxyferuloyl-CoA to sinapoyl-CoA. Plays a role in the synthesis of feruloylated polysaccharides. Involved in the reinforcement of the plant cell wall. Also involved in the responding to wounding or pathogen challenge by the increased formation of cell wall-bound ferulic acid polymers. The protein is Caffeoyl-CoA O-methyltransferase 1 (CCOAOMT1) of Nicotiana tabacum (Common tobacco).